A 328-amino-acid polypeptide reads, in one-letter code: RNA binding protein fox-1 homolog 3 (328 aa).

Residues 1-30 show a composition bias toward pro residues; that stretch reads MAQPYPPAQYPPPPQNGIPAEYAPPPPHPT. The tract at residues 1–106 is disordered; that stretch reads MAQPYPPAQY…QPKRLHVSNI (106 aa). The segment covering 49 to 87 has biased composition (polar residues); it reads TPAQTHPEQPSSDTSTQPITGAQTVPQTDEAAQTDSQPL. Positions 99–172 constitute an RRM domain; sequence KRLHVSNIPF…NPVVGAVYGP (74 aa). The residue at position 192 (R192) is an Asymmetric dimethylarginine; alternate. R192 carries the post-translational modification Omega-N-methylarginine; alternate. At R288 the chain carries Asymmetric dimethylarginine.

The protein resides in the nucleus. It localises to the cytoplasm. Pre-mRNA alternative splicing regulator. Regulates alternative splicing of RBFOX2 to enhance the production of mRNA species that are targeted for nonsense-mediated decay (NMD). This Bos taurus (Bovine) protein is RNA binding protein fox-1 homolog 3 (RBFOX3).